Here is a 756-residue protein sequence, read N- to C-terminus: MFLLLVLLTGLGGMHADLNPHKTFLQTTIPEKISSSDAKTDPEHNVVYMITIEGKPYFVHLKKQSILSSASFIHSYDKNDIRHSKPLLVQMDCNYNGYVAGIPNSLVTLSVCSGLRGTMQLKNISYGIEPMEAVSGFIHKIYEEKFADTNILLEENDTYSWFNSEYQVRKSSEKTDFIKLFPRYIEMHIVVDKNLFDYMGSDINAVTQKVIQIIGLVNTMLTQLQLTVIISSIEIWSNKNKISTTGHAEYVLLEFFEWKKDHLNFKPHQIAYLFVYRKLPTLIGATFPGQVCNKDFAAAVALYPEGLSLESYTVIIVQLLGLNLGLTYDKTDTCHCSGDVCTMTPKAVYSGGVKDFSVCSLDDFKYISSHNGLTCLQTNPLEMPTYTQRRICGNGLLEGGEECDCGNKDNCTHKLCCDALTCRLKDNAQCGSGDCCSKDCKFKPANTICRKSVDVECDFTEFCNGSYPYCLLDTYVRDGEYCDSGGAFCFQGRCRTFDKQCDDLIGRGSRGAPIFCYDEINTRGDKFGNCGTEYCLFQHILCGKLVCTWEHKDLISRPNLSVIYAHVRDQTCVSTYLPSRKPPPVASTVSKTSYYSVDDRDETFVQDGSVCGPDMYCFKMRCKHVRFLMDFETCEASIECSGHGICNNFNHCHCEKGYNPPHCKPKKEAFGSTDDGHLVPAEKSYMEEGRHAPFQKQRFQLIFYISLPVLIITTAILIKRKKLRELCYRGETESESSVSQESSSNSKSSLSESTSL.

The first 16 residues, 1-16, serve as a signal peptide directing secretion; the sequence is MFLLLVLLTGLGGMHA. The propeptide occupies 17–142; sequence DLNPHKTFLQ…AVSGFIHKIY (126 aa). Residues 17-698 are Extracellular-facing; that stretch reads DLNPHKTFLQ…GRHAPFQKQR (682 aa). A Peptidase M12B domain is found at 183–380; the sequence is RYIEMHIVVD…NGLTCLQTNP (198 aa). 4 disulfides stabilise this stretch: Cys-292/Cys-375, Cys-334/Cys-359, Cys-336/Cys-341, and Cys-449/Cys-470. The Disintegrin domain occupies 389–478; it reads RRICGNGLLE…YCLLDTYVRD (90 aa). An N-linked (GlcNAc...) asparagine glycan is attached at Asn-559. The EGF-like domain maps to 630–664; that stretch reads DFETCEASIECSGHGICNNFNHCHCEKGYNPPHCK. 3 cysteine pairs are disulfide-bonded: Cys-634/Cys-646, Cys-640/Cys-652, and Cys-654/Cys-663. Residues 699 to 719 traverse the membrane as a helical segment; that stretch reads FQLIFYISLPVLIITTAILIK. The Cytoplasmic portion of the chain corresponds to 720–756; the sequence is RKKLRELCYRGETESESSVSQESSSNSKSSLSESTSL. Residues 731 to 756 form a disordered region; it reads ETESESSVSQESSSNSKSSLSESTSL. Over residues 735–756 the composition is skewed to low complexity; the sequence is ESSVSQESSSNSKSSLSESTSL.

As to quaternary structure, interacts with TEX101. Post-translationally, subject to proteolytic processing during epididymal transit of spermatozoa. Detected in testis (at protein level). Detected in adult and prepubertal testis. Detected at very low levels in heart, kidney, brain, muscle ovary and uterus.

It localises to the membrane. This is a non catalytic metalloprotease-like protein. May play a role in sperm-egg fusion. The protein is Disintegrin and metalloproteinase domain-containing protein 5 (ADAM5) of Macaca fascicularis (Crab-eating macaque).